A 102-amino-acid chain; its full sequence is Small ribosomal subunit protein eS24 (102 aa).

The segment at 70-102 (VYDSPAQAAEVEHDHMLERNKIGADDADAEEAE) is disordered. Over residues 79–93 (EVEHDHMLERNKIGA) the composition is skewed to basic and acidic residues.

It belongs to the eukaryotic ribosomal protein eS24 family.

This chain is Small ribosomal subunit protein eS24, found in Halobacterium salinarum (strain ATCC 29341 / DSM 671 / R1).